The chain runs to 70 residues: MPTIRVKENEPFEVALRRFKRAVEKTGLLTELRAREFYEKPTTERKRKHAAAVKRHYKRIRSQMLPPKLY.

This sequence belongs to the bacterial ribosomal protein bS21 family.

The sequence is that of Small ribosomal subunit protein bS21 from Chromobacterium violaceum (strain ATCC 12472 / DSM 30191 / JCM 1249 / CCUG 213 / NBRC 12614 / NCIMB 9131 / NCTC 9757 / MK).